The chain runs to 693 residues: Elongation factor G (693 aa).

Residues 8-284 form the tr-type G domain; sequence HMVRNIGIAA…AVIDYLPAPD (277 aa). Residues 17 to 24, 81 to 85, and 135 to 138 contribute to the GTP site; these read AHIDAGKT, DTPGH, and NKMD.

It belongs to the TRAFAC class translation factor GTPase superfamily. Classic translation factor GTPase family. EF-G/EF-2 subfamily.

It is found in the cytoplasm. Catalyzes the GTP-dependent ribosomal translocation step during translation elongation. During this step, the ribosome changes from the pre-translocational (PRE) to the post-translocational (POST) state as the newly formed A-site-bound peptidyl-tRNA and P-site-bound deacylated tRNA move to the P and E sites, respectively. Catalyzes the coordinated movement of the two tRNA molecules, the mRNA and conformational changes in the ribosome. The polypeptide is Elongation factor G (Nautilia profundicola (strain ATCC BAA-1463 / DSM 18972 / AmH)).